A 771-amino-acid chain; its full sequence is Topoisomerase 1-associated factor 2 (771 aa).

Disordered stretches follow at residues N48–S69, E271–D330, and S346–L367. Residues N51–S69 are compositionally biased toward low complexity. A compositionally biased stretch (polar residues) spans T275–N294. Over residues D295–L307 the composition is skewed to basic and acidic residues. The span at S346–A359 shows a compositional bias: polar residues. S397 bears the Phosphoserine mark. Position 405 is a phosphothreonine (T405). A disordered region spans residues N633–Q771. Positions A640–V652 are enriched in polar residues. A compositionally biased stretch (low complexity) spans S690–S709.

It to yeast YJL076w. In terms of assembly, interacts with HPR1.

It is found in the nucleus. The chain is Topoisomerase 1-associated factor 2 (TOF2) from Saccharomyces cerevisiae (strain ATCC 204508 / S288c) (Baker's yeast).